The following is a 369-amino-acid chain: Anhydro-N-acetylmuramic acid kinase (369 aa).

12–19 (GTSLDGVD) lines the ATP pocket.

This sequence belongs to the anhydro-N-acetylmuramic acid kinase family.

The catalysed reaction is 1,6-anhydro-N-acetyl-beta-muramate + ATP + H2O = N-acetyl-D-muramate 6-phosphate + ADP + H(+). It functions in the pathway amino-sugar metabolism; 1,6-anhydro-N-acetylmuramate degradation. It participates in cell wall biogenesis; peptidoglycan recycling. Catalyzes the specific phosphorylation of 1,6-anhydro-N-acetylmuramic acid (anhMurNAc) with the simultaneous cleavage of the 1,6-anhydro ring, generating MurNAc-6-P. Is required for the utilization of anhMurNAc either imported from the medium or derived from its own cell wall murein, and thus plays a role in cell wall recycling. The chain is Anhydro-N-acetylmuramic acid kinase from Escherichia coli O157:H7.